The following is a 486-amino-acid chain: ATP synthase subunit beta (486 aa).

Residue 164 to 171 (GGAGVGKT) participates in ATP binding.

The protein belongs to the ATPase alpha/beta chains family. As to quaternary structure, F-type ATPases have 2 components, CF(1) - the catalytic core - and CF(0) - the membrane proton channel. CF(1) has five subunits: alpha(3), beta(3), gamma(1), delta(1), epsilon(1). CF(0) has four main subunits: a(1), b(1), b'(1) and c(9-12).

It localises to the cellular thylakoid membrane. The enzyme catalyses ATP + H2O + 4 H(+)(in) = ADP + phosphate + 5 H(+)(out). Functionally, produces ATP from ADP in the presence of a proton gradient across the membrane. The catalytic sites are hosted primarily by the beta subunits. The polypeptide is ATP synthase subunit beta (Prochlorococcus marinus (strain MIT 9312)).